A 248-amino-acid chain; its full sequence is 23S rRNA (guanosine-2'-O-)-methyltransferase RlmB (248 aa).

Residues glycine 198, leucine 218, and leucine 227 each contribute to the S-adenosyl-L-methionine site.

Belongs to the class IV-like SAM-binding methyltransferase superfamily. RNA methyltransferase TrmH family. RlmB subfamily.

Its subcellular location is the cytoplasm. The enzyme catalyses guanosine(2251) in 23S rRNA + S-adenosyl-L-methionine = 2'-O-methylguanosine(2251) in 23S rRNA + S-adenosyl-L-homocysteine + H(+). Specifically methylates the ribose of guanosine 2251 in 23S rRNA. This chain is 23S rRNA (guanosine-2'-O-)-methyltransferase RlmB, found in Pseudomonas aeruginosa (strain ATCC 15692 / DSM 22644 / CIP 104116 / JCM 14847 / LMG 12228 / 1C / PRS 101 / PAO1).